We begin with the raw amino-acid sequence, 548 residues long: Probable malate:quinone oxidoreductase (548 aa).

Residues 521-548 form a disordered region; that stretch reads DKPQAADSTPKPQLKPQPVQKEVADIAL. Low complexity predominate over residues 530–541; the sequence is PKPQLKPQPVQK.

The protein belongs to the MQO family. FAD is required as a cofactor.

It carries out the reaction (S)-malate + a quinone = a quinol + oxaloacetate. It functions in the pathway carbohydrate metabolism; tricarboxylic acid cycle; oxaloacetate from (S)-malate (quinone route): step 1/1. This chain is Probable malate:quinone oxidoreductase, found in Shigella boydii serotype 4 (strain Sb227).